We begin with the raw amino-acid sequence, 251 residues long: Flap endonuclease Xni (251 aa).

Aspartate 104 contacts Mg(2+). Residues 160 to 249 (VQPQQLPDYW…IDGNLQQLRL (90 aa)) form the 5'-3' exonuclease domain. Residues leucine 171, alanine 172, proline 180, valine 182, and isoleucine 185 each coordinate K(+). The segment at 184-189 (GIGPKS) is interaction with DNA.

The protein belongs to the Xni family. Requires Mg(2+) as cofactor. K(+) serves as cofactor.

In terms of biological role, has flap endonuclease activity. During DNA replication, flap endonucleases cleave the 5'-overhanging flap structure that is generated by displacement synthesis when DNA polymerase encounters the 5'-end of a downstream Okazaki fragment. The polypeptide is Flap endonuclease Xni (Escherichia coli O81 (strain ED1a)).